Here is a 393-residue protein sequence, read N- to C-terminus: MVTVEEVRKAKRAEGPATILAIGTATPANCVNQSTYPDYYFRITNSEHKTELKEKFQRMCDKSMITKRYMHLTEEILKENPSFCEYMAPSLDARQDIAVVEVPKLGKEAAQSAIKEWGQPKSKITHVFFCTTSGVDMPGADYQLTKLLGLRPSVKRLMMYQQGCFAGGTVLRLAKDLAENNKGARVLIVCSEITVVTFRGPSETHLDSLVGQALFGDGAAAVIVGADPTPAEKPLFQLVSAAQTLAPDSCGAIDGHLREVGLTFHLLKDVPSVVSNNIEKCLFEAFNPLGISDWNSVFWIAHPGGPAILDQVEDKLGLKPEKLRATRHVLSEYGNMSSACVLFILDEMRKASSNAGLGTTGEGLEWGVLFGFGPGLTIETVVLHSVPIKPGPH.

Cys-164 is a catalytic residue.

It belongs to the thiolase-like superfamily. Chalcone/stilbene synthases family.

It catalyses the reaction (E)-4-coumaroyl-CoA + 3 malonyl-CoA + 3 H(+) = 2',4,4',6'-tetrahydroxychalcone + 3 CO2 + 4 CoA. It participates in secondary metabolite biosynthesis; flavonoid biosynthesis. Its function is as follows. The primary product of this enzyme is 4,2',4',6'-tetrahydroxychalcone (also termed naringenin-chalcone or chalcone) which can under specific conditions spontaneously isomerize into naringenin. The protein is Chalcone synthase DIII (CHS-DIII) of Ipomoea batatas (Sweet potato).